A 464-amino-acid chain; its full sequence is Protein FAM90A9 (464 aa).

Disordered regions lie at residues Met1–Leu42, Pro70–Ala389, and Ala411–Pro437. Composition is skewed to basic and acidic residues over residues Gly74–Val89 and Asn97–Arg114. Low complexity predominate over residues Leu180–Leu197.

It belongs to the FAM90 family.

The protein is Protein FAM90A9 (FAM90A9) of Homo sapiens (Human).